A 417-amino-acid chain; its full sequence is Serine hydroxymethyltransferase 4 (417 aa).

Residues Leu-121 and 125-127 (GHL) each bind (6S)-5,6,7,8-tetrahydrofolate. At Lys-230 the chain carries N6-(pyridoxal phosphate)lysine. Residue 355–357 (SPF) coordinates (6S)-5,6,7,8-tetrahydrofolate.

It belongs to the SHMT family. Homodimer. Pyridoxal 5'-phosphate serves as cofactor.

Its subcellular location is the cytoplasm. The enzyme catalyses (6R)-5,10-methylene-5,6,7,8-tetrahydrofolate + glycine + H2O = (6S)-5,6,7,8-tetrahydrofolate + L-serine. It participates in one-carbon metabolism; tetrahydrofolate interconversion. It functions in the pathway amino-acid biosynthesis; glycine biosynthesis; glycine from L-serine: step 1/1. Its function is as follows. Catalyzes the reversible interconversion of serine and glycine with tetrahydrofolate (THF) serving as the one-carbon carrier. This reaction serves as the major source of one-carbon groups required for the biosynthesis of purines, thymidylate, methionine, and other important biomolecules. Also exhibits THF-independent aldolase activity toward beta-hydroxyamino acids, producing glycine and aldehydes, via a retro-aldol mechanism. The protein is Serine hydroxymethyltransferase 4 of Colwellia psychrerythraea (strain 34H / ATCC BAA-681) (Vibrio psychroerythus).